A 274-amino-acid polypeptide reads, in one-letter code: Enoyl-CoA isomerase/hydratase fer4 (274 aa).

Substrate contacts are provided by residues 77 to 81 and glycine 124; that span reads AGADL. Positions 79–109 form a coiled coil; that stretch reads ADLKERREMSEAEVIEFLQDLRHMLEQVEKL.

The protein belongs to the enoyl-CoA hydratase/isomerase family.

It carries out the reaction a (3S)-3-hydroxyacyl-CoA = a (2E)-enoyl-CoA + H2O. It catalyses the reaction a 4-saturated-(3S)-3-hydroxyacyl-CoA = a (3E)-enoyl-CoA + H2O. The protein operates within siderophore biosynthesis. Its function is as follows. Enoyl-CoA isomerase/hydratase; part of the gene cluster that mediates the biosynthesis of siderophore ferrichrome A which is contributing to organismal virulence. The first step of ferrichrome A biosynthesis is performed by the HMG-CoA synthase hcs1 which catalyzes the generation of HMG-CoA and CoA using acetoacetyl-CoA and acetyl-CoA as substrates. The enoyl-CoA isomerase/hydratase fer4 then catalyzes the conversion of hcs1-produced HMG-CoA to methylglutaconyl-CoA. The acyltransferase fer5 then fuses the fer4-generated methylglutaconyl-CoA with sid1-generated hydroxyornithine to yield methylglutaconyl hydroxyornithine. Methylglutaconyl hydroxyornithine is then available for use by the NRPS fer3 to generate ferrichrome A. The chain is Enoyl-CoA isomerase/hydratase fer4 from Mycosarcoma maydis (Corn smut fungus).